The sequence spans 255 residues: Cell division protein DivIB (255 aa).

Residues 1 to 30 (MKNSKVIKLQDRVPKLKNQKKRNKPPVNHR) lie on the Cytoplasmic side of the membrane. Residues 31–51 (LILYISILFLLVLFLIYFRSP) form a helical membrane-spanning segment. Residues 52 to 255 (LSNIKKISVF…FKYLDDEKKK (204 aa)) are Extracellular-facing. One can recognise a POTRA domain in the interval 53–121 (SNIKKISVFG…NKIDIHIEEY (69 aa)).

The protein belongs to the FtsQ/DivIB family. DivIB subfamily.

It is found in the cell membrane. In terms of biological role, cell division protein that may be involved in stabilizing or promoting the assembly of the division complex. The protein is Cell division protein DivIB of Bacillus cytotoxicus (strain DSM 22905 / CIP 110041 / 391-98 / NVH 391-98).